The chain runs to 347 residues: Photosystem II protein D1 (347 aa).

The next 3 helical transmembrane spans lie at 31 to 48 (YIGWFGIFMFPLTGLAII), 120 to 135 (HFIGGVSSWMGREWEF), and 144 to 158 (WIYLAFSAPLVAATA). Residue H120 coordinates chlorophyll a. W128 contributes to the pheophytin a binding site. Residues D172 and E191 each coordinate [CaMn4O5] cluster. A helical membrane pass occupies residues 199 to 220 (FHILGVAGVFGGSLFSAMHGSL). H200 serves as a coordination point for chlorophyll a. Residues H217 and 266-267 (SF) each bind a quinone. H217 is a Fe cation binding site. H274 contributes to the Fe cation binding site. The chain crosses the membrane as a helical span at residues 276–290 (FLAAWPVIGIWFTAL). [CaMn4O5] cluster-binding residues include H334, E335, and D344.

The protein belongs to the reaction center PufL/M/PsbA/D family. In terms of assembly, PSII is composed of 1 copy each of membrane proteins PsbA, PsbB, PsbC, PsbD, PsbE, PsbF, PsbH, PsbI, PsbJ, PsbK, PsbL, PsbM, PsbT, PsbX, PsbY, PsbZ, Psb30/Ycf12, at least 3 peripheral proteins of the oxygen-evolving complex and a large number of cofactors. It forms dimeric complexes. It depends on The D1/D2 heterodimer binds P680, chlorophylls that are the primary electron donor of PSII, and subsequent electron acceptors. It shares a non-heme iron and each subunit binds pheophytin, quinone, additional chlorophylls, carotenoids and lipids. D1 provides most of the ligands for the Mn4-Ca-O5 cluster of the oxygen-evolving complex (OEC). There is also a Cl(-1) ion associated with D1 and D2, which is required for oxygen evolution. The PSII complex binds additional chlorophylls, carotenoids and specific lipids. as a cofactor. In terms of processing, tyr-163 forms a radical intermediate that is referred to as redox-active TyrZ, YZ or Y-Z.

The protein localises to the plastid. It is found in the chloroplast thylakoid membrane. It carries out the reaction 2 a plastoquinone + 4 hnu + 2 H2O = 2 a plastoquinol + O2. Photosystem II (PSII) is a light-driven water:plastoquinone oxidoreductase that uses light energy to abstract electrons from H(2)O, generating O(2) and a proton gradient subsequently used for ATP formation. It consists of a core antenna complex that captures photons, and an electron transfer chain that converts photonic excitation into a charge separation. The D1/D2 (PsbA/PsbD) reaction center heterodimer binds P680, the primary electron donor of PSII as well as several subsequent electron acceptors. The polypeptide is Photosystem II protein D1 (Alexandrium tamarense (Red tide dinoflagellate)).